The following is a 396-amino-acid chain: Phosphoglycerate kinase (396 aa).

Substrate contacts are provided by residues 21–23, R36, 59–62, R118, and R151; these read DFN and HFDR. ATP-binding positions include K201, E323, and 353–356; that span reads GGDT.

It belongs to the phosphoglycerate kinase family. In terms of assembly, monomer.

The protein localises to the cytoplasm. It carries out the reaction (2R)-3-phosphoglycerate + ATP = (2R)-3-phospho-glyceroyl phosphate + ADP. The protein operates within carbohydrate degradation; glycolysis; pyruvate from D-glyceraldehyde 3-phosphate: step 2/5. This is Phosphoglycerate kinase from Caulobacter vibrioides (strain ATCC 19089 / CIP 103742 / CB 15) (Caulobacter crescentus).